The following is a 139-amino-acid chain: MKKTTILNAQLSHVIATMGHTDGLTICDAGLPIPTEQHCIDLALTKGIPDFLSVLQAVSSELFIEKIVLAEEIKNINPQIEQQLLMVIQQIEVQQKNTIKIEYIPHNEFKHQSNQAKAVVRTGECSPYANVILYSGVPF.

The active-site Proton donor is histidine 20. Residues aspartate 28, histidine 106, and 128 to 130 (YAN) contribute to the substrate site.

The protein belongs to the RbsD / FucU family. RbsD subfamily. In terms of assembly, homodecamer.

The protein localises to the cytoplasm. It catalyses the reaction beta-D-ribopyranose = beta-D-ribofuranose. It participates in carbohydrate metabolism; D-ribose degradation; D-ribose 5-phosphate from beta-D-ribopyranose: step 1/2. Functionally, catalyzes the interconversion of beta-pyran and beta-furan forms of D-ribose. This is D-ribose pyranase from Glaesserella parasuis serovar 5 (strain SH0165) (Haemophilus parasuis).